We begin with the raw amino-acid sequence, 391 residues long: uncharacterized protein (391 aa).

Over residues 118–149 (SINSLPPTTTTTTTTTTTTTIPNNNNNITLSP) the composition is skewed to low complexity. 4 disordered regions span residues 118 to 162 (SINS…HQHP), 184 to 258 (QTNV…TPRN), 272 to 327 (NNNL…NNLN), and 337 to 356 (LNLN…NNNN). A compositionally biased stretch (basic residues) spans 150–162 (QHHHGQQQHHQHP). Positions 186–211 (NVNNNNNNNNNNNNNNNSNNNNNNNN) are enriched in low complexity. Polar residues predominate over residues 212 to 223 (DFSTPNSFSVPT). A compositionally biased stretch (low complexity) spans 244–256 (NTPNNSTSNPTTP).

This is an uncharacterized protein from Dictyostelium discoideum (Social amoeba).